We begin with the raw amino-acid sequence, 333 residues long: Torsin-1A (333 aa).

An N-terminal signal peptide occupies residues 1–20 (MKLGRAALALLLLAPCVVRA). Residues 92–252 (KPKKPLTLSL…VSVFNNKNSG (161 aa)) are interaction with SNAPIN. Residue 103–110 (GWTGTGKN) participates in ATP binding. Residues Asn-144 and Asn-159 are each glycosylated (N-linked (GlcNAc...) asparagine). The tract at residues 252 to 333 (GFWHSSLIDR…FTKLDYYLDD (82 aa)) is interaction with KLC1. The tract at residues 313 to 333 (KVFSDKGCKTVFTKLDYYLDD) is interaction with SYNE3.

The protein belongs to the ClpA/ClpB family. Torsin subfamily. As to quaternary structure, homohexamer. Interacts with TOR1B; the interaction may be specific of neural tissues. Interacts (ATP-bound) with TOR1AIP1 and TOR1AIP2; the interactions induce ATPase activity. Interacts with KLHL14; preferentially when ATP-free. Interacts with KLC1 (via TPR repeats); the interaction associates TOR1A with the kinesin oligomeric complex. Interacts with COPS4; the interaction associates TOR1A with the CSN complex. Interacts with SNAPIN; the interaction is direct and associates SNAPIN with the CSN complex. Interacts with STON2. Interacts (ATP-bound) with SYNE3 (via KASH domain); the interaction is required for SYNE3 nuclear envelope localization. Interacts with VIM; the interaction associates TOR1A with the cytoskeleton. Interacts with PLEC. Interacts (ATP-bound) with SLC6A3; regulates SLC6A3 transport to the plasma membrane. N-glycosylated. Widely expressed (at protein level).

The protein resides in the endoplasmic reticulum lumen. Its subcellular location is the nucleus membrane. It is found in the cell projection. The protein localises to the growth cone. It localises to the cytoplasmic vesicle membrane. The protein resides in the synapse. Its subcellular location is the synaptosome. It is found in the cytoplasm. The protein localises to the cytoskeleton. It localises to the cytoplasmic vesicle. The protein resides in the secretory vesicle. Its subcellular location is the synaptic vesicle. The enzyme catalyses ATP + H2O = ADP + phosphate + H(+). Functionally, protein with chaperone functions important for the control of protein folding, processing, stability and localization as well as for the reduction of misfolded protein aggregates. Involved in the regulation of synaptic vesicle recycling, controls STON2 protein stability in collaboration with the COP9 signalosome complex (CSN). In the nucleus, may link the cytoskeleton with the nuclear envelope, this mechanism seems to be crucial for the control of nuclear polarity, cell movement and, specifically in neurons, nuclear envelope integrity. Participates in the cellular trafficking and may regulate the subcellular location of multipass membrane proteins such as the dopamine transporter SLC6A3, leading to the modulation of dopamine neurotransmission. In the endoplasmic reticulum, plays a role in the quality control of protein folding by increasing clearance of misfolded proteins such as SGCE variants or holding them in an intermediate state for proper refolding. May have a redundant function with TOR1B in non-neural tissues. The sequence is that of Torsin-1A (Tor1a) from Mus musculus (Mouse).